The primary structure comprises 544 residues: Chaperonin GroEL (544 aa).

ATP-binding positions include T30–P33, K51, D87–T91, G415, N478–A480, and D494.

The protein belongs to the chaperonin (HSP60) family. Forms a cylinder of 14 subunits composed of two heptameric rings stacked back-to-back. Interacts with the co-chaperonin GroES.

Its subcellular location is the cytoplasm. It carries out the reaction ATP + H2O + a folded polypeptide = ADP + phosphate + an unfolded polypeptide.. In terms of biological role, together with its co-chaperonin GroES, plays an essential role in assisting protein folding. The GroEL-GroES system forms a nano-cage that allows encapsulation of the non-native substrate proteins and provides a physical environment optimized to promote and accelerate protein folding. In Geobacter sulfurreducens (strain ATCC 51573 / DSM 12127 / PCA), this protein is Chaperonin GroEL.